The following is a 207-amino-acid chain: Thiamine-phosphate synthase (207 aa).

4-amino-2-methyl-5-(diphosphooxymethyl)pyrimidine-binding positions include Gln-36–Lys-40 and Asn-68. Mg(2+) contacts are provided by Asp-69 and Asp-88. 4-amino-2-methyl-5-(diphosphooxymethyl)pyrimidine is bound at residue Ser-106. Residue Thr-132–Thr-134 participates in 2-[(2R,5Z)-2-carboxy-4-methylthiazol-5(2H)-ylidene]ethyl phosphate binding. A 4-amino-2-methyl-5-(diphosphooxymethyl)pyrimidine-binding site is contributed by Lys-135. Residues Gly-162 and Val-182–Ser-183 contribute to the 2-[(2R,5Z)-2-carboxy-4-methylthiazol-5(2H)-ylidene]ethyl phosphate site.

It belongs to the thiamine-phosphate synthase family. Mg(2+) serves as cofactor.

The enzyme catalyses 2-[(2R,5Z)-2-carboxy-4-methylthiazol-5(2H)-ylidene]ethyl phosphate + 4-amino-2-methyl-5-(diphosphooxymethyl)pyrimidine + 2 H(+) = thiamine phosphate + CO2 + diphosphate. It carries out the reaction 2-(2-carboxy-4-methylthiazol-5-yl)ethyl phosphate + 4-amino-2-methyl-5-(diphosphooxymethyl)pyrimidine + 2 H(+) = thiamine phosphate + CO2 + diphosphate. The catalysed reaction is 4-methyl-5-(2-phosphooxyethyl)-thiazole + 4-amino-2-methyl-5-(diphosphooxymethyl)pyrimidine + H(+) = thiamine phosphate + diphosphate. Its pathway is cofactor biosynthesis; thiamine diphosphate biosynthesis; thiamine phosphate from 4-amino-2-methyl-5-diphosphomethylpyrimidine and 4-methyl-5-(2-phosphoethyl)-thiazole: step 1/1. Its function is as follows. Condenses 4-methyl-5-(beta-hydroxyethyl)thiazole monophosphate (THZ-P) and 2-methyl-4-amino-5-hydroxymethyl pyrimidine pyrophosphate (HMP-PP) to form thiamine monophosphate (TMP). The protein is Thiamine-phosphate synthase of Methanococcus maripaludis (strain DSM 14266 / JCM 13030 / NBRC 101832 / S2 / LL).